The sequence spans 256 residues: Probable aquaporin TIP5-1 (256 aa).

M1 is modified (N-acetylmethionine). A run of 5 helical transmembrane segments spans residues 24-44, 57-77, 89-109, 144-164, and 171-191; these read CYVS…GSVM, PFGV…SVYI, AVTF…MFYW, FGAS…VFTA, and LPLA…VLAA. Residues 87 to 89 carry the NPA 1 motif; sequence NPA. Positions 200–202 match the NPA 2 motif; it reads NPA. Residues 222-242 traverse the membrane as a helical segment; the sequence is VGPLLGGATAALVYDNVVVPV. Residue S249 is modified to Phosphoserine.

Belongs to the MIP/aquaporin (TC 1.A.8) family. TIP (TC 1.A.8.10) subfamily.

Its subcellular location is the membrane. In terms of biological role, potential aquaporin, which may facilitate the transport of water and small neutral solutes across cell membranes. The polypeptide is Probable aquaporin TIP5-1 (TIP5-1) (Arabidopsis thaliana (Mouse-ear cress)).